We begin with the raw amino-acid sequence, 513 residues long: Maturase K (513 aa).

This sequence belongs to the intron maturase 2 family. MatK subfamily.

It is found in the plastid. The protein resides in the chloroplast. In terms of biological role, usually encoded in the trnK tRNA gene intron. Probably assists in splicing its own and other chloroplast group II introns. The chain is Maturase K from Danthonia spicata (Poverty oatgrass).